A 102-amino-acid chain; its full sequence is Protamine-2 (102 aa).

Disordered stretches follow at residues 1-40 (MVRY…SPEH) and 67-102 (HRQQ…CRRH). 3 positions are modified to phosphoserine: serine 8, serine 10, and serine 37.

The protein belongs to the protamine P2 family. In terms of assembly, interacts with TDRP. Proteolytic processing into mature chains is required for histone eviction during spermatogenesis. Transition proteins (TNP1 and TNP2) are required for processing. In terms of tissue distribution, testis.

It localises to the nucleus. The protein localises to the chromosome. Its function is as follows. Protamines substitute for histones in the chromatin of sperm during the haploid phase of spermatogenesis. They compact sperm DNA into a highly condensed, stable and inactive complex. In Pan troglodytes (Chimpanzee), this protein is Protamine-2 (PRM2).